A 400-amino-acid polypeptide reads, in one-letter code: Formate-dependent phosphoribosylglycinamide formyltransferase (400 aa).

N(1)-(5-phospho-beta-D-ribosyl)glycinamide contacts are provided by residues 22–23 (EL) and glutamate 82. ATP is bound by residues arginine 115, lysine 156, 161–166 (SSGKGQ), 196–199 (EGFI), and glutamate 204. One can recognise an ATP-grasp domain in the interval 120–309 (RLAAETLGLP…EFALHARAIL (190 aa)). Mg(2+) contacts are provided by glutamate 268 and glutamate 280. N(1)-(5-phospho-beta-D-ribosyl)glycinamide-binding positions include aspartate 287, lysine 361, and 368 to 369 (RR).

It belongs to the PurK/PurT family. In terms of assembly, homodimer.

The enzyme catalyses N(1)-(5-phospho-beta-D-ribosyl)glycinamide + formate + ATP = N(2)-formyl-N(1)-(5-phospho-beta-D-ribosyl)glycinamide + ADP + phosphate + H(+). The protein operates within purine metabolism; IMP biosynthesis via de novo pathway; N(2)-formyl-N(1)-(5-phospho-D-ribosyl)glycinamide from N(1)-(5-phospho-D-ribosyl)glycinamide (formate route): step 1/1. Its function is as follows. Involved in the de novo purine biosynthesis. Catalyzes the transfer of formate to 5-phospho-ribosyl-glycinamide (GAR), producing 5-phospho-ribosyl-N-formylglycinamide (FGAR). Formate is provided by PurU via hydrolysis of 10-formyl-tetrahydrofolate. The chain is Formate-dependent phosphoribosylglycinamide formyltransferase from Xanthomonas campestris pv. campestris (strain 8004).